Reading from the N-terminus, the 156-residue chain is 6,7-dimethyl-8-ribityllumazine synthase (156 aa).

Residues Phe22, Ala57–Glu59, and Thr81–Ile83 each bind 5-amino-6-(D-ribitylamino)uracil. Gly86–Thr87 is a (2S)-2-hydroxy-3-oxobutyl phosphate binding site. Residue His89 is the Proton donor of the active site. Phe114 lines the 5-amino-6-(D-ribitylamino)uracil pocket. Arg128 contributes to the (2S)-2-hydroxy-3-oxobutyl phosphate binding site.

It belongs to the DMRL synthase family. In terms of assembly, forms an icosahedral capsid composed of 60 subunits, arranged as a dodecamer of pentamers.

The catalysed reaction is (2S)-2-hydroxy-3-oxobutyl phosphate + 5-amino-6-(D-ribitylamino)uracil = 6,7-dimethyl-8-(1-D-ribityl)lumazine + phosphate + 2 H2O + H(+). The protein operates within cofactor biosynthesis; riboflavin biosynthesis; riboflavin from 2-hydroxy-3-oxobutyl phosphate and 5-amino-6-(D-ribitylamino)uracil: step 1/2. Functionally, catalyzes the formation of 6,7-dimethyl-8-ribityllumazine by condensation of 5-amino-6-(D-ribitylamino)uracil with 3,4-dihydroxy-2-butanone 4-phosphate. This is the penultimate step in the biosynthesis of riboflavin. This chain is 6,7-dimethyl-8-ribityllumazine synthase, found in Salmonella agona (strain SL483).